A 258-amino-acid chain; its full sequence is Spindlin-2A (258 aa).

Residues 1–23 are compositionally biased toward low complexity; sequence MKTPNAQEAEGQQTRAAAGRATG. A disordered region spans residues 1–49; sequence MKTPNAQEAEGQQTRAAAGRATGSANMTKKKVSQKKQRGRPSSQPRRNI. The segment covering 28–39 has biased composition (basic residues); sequence TKKKVSQKKQRG. 3 tudor-like domain regions span residues 50–99, 129–178, and 210–255; these read VGCR…LELH, IGKA…YQLL, and IGKH…YDLV. Histone H3K4me3 and H3R8me2a binding stretches follow at residues glutamate 138 and 246–248; that span reads DFH.

Belongs to the SPIN/STSY family. As to quaternary structure, interacts with C11orf84/SPINDOC.

The protein localises to the nucleus. In terms of biological role, may be involved in the regulation of cell cycle progression. Exhibits H3K4me3-binding activity. The chain is Spindlin-2A (SPIN2A) from Homo sapiens (Human).